The following is a 488-amino-acid chain: Putative BPI/LBP family protein At1g04970 (488 aa).

The N-terminal stretch at 1–24 is a signal peptide; that stretch reads MDVGRCFLFLLLPSFFFLPSQTQS. Residues N79, N109, N231, N242, and N341 are each glycosylated (N-linked (GlcNAc...) asparagine).

Belongs to the BPI/LBP/Plunc superfamily. BPI/LBP (TC 1.C.40) family.

The polypeptide is Putative BPI/LBP family protein At1g04970 (Arabidopsis thaliana (Mouse-ear cress)).